The chain runs to 215 residues: ATP-dependent Clp protease proteolytic subunit 1 (215 aa).

Residue serine 111 is the Nucleophile of the active site. The active site involves histidine 136.

Belongs to the peptidase S14 family. Fourteen ClpP subunits assemble into 2 heptameric rings which stack back to back to give a disk-like structure with a central cavity, resembling the structure of eukaryotic proteasomes.

It localises to the cytoplasm. The enzyme catalyses Hydrolysis of proteins to small peptides in the presence of ATP and magnesium. alpha-casein is the usual test substrate. In the absence of ATP, only oligopeptides shorter than five residues are hydrolyzed (such as succinyl-Leu-Tyr-|-NHMec, and Leu-Tyr-Leu-|-Tyr-Trp, in which cleavage of the -Tyr-|-Leu- and -Tyr-|-Trp bonds also occurs).. Its function is as follows. Cleaves peptides in various proteins in a process that requires ATP hydrolysis. Has a chymotrypsin-like activity. Plays a major role in the degradation of misfolded proteins. The chain is ATP-dependent Clp protease proteolytic subunit 1 from Gluconobacter oxydans (strain 621H) (Gluconobacter suboxydans).